Here is a 185-residue protein sequence, read N- to C-terminus: Peptidyl-tRNA hydrolase (185 aa).

Residue Y14 participates in tRNA binding. H19 functions as the Proton acceptor in the catalytic mechanism. TRNA is bound by residues Y64, N66, and N112.

The protein belongs to the PTH family. In terms of assembly, monomer.

It localises to the cytoplasm. It carries out the reaction an N-acyl-L-alpha-aminoacyl-tRNA + H2O = an N-acyl-L-amino acid + a tRNA + H(+). Its function is as follows. Hydrolyzes ribosome-free peptidyl-tRNAs (with 1 or more amino acids incorporated), which drop off the ribosome during protein synthesis, or as a result of ribosome stalling. In terms of biological role, catalyzes the release of premature peptidyl moieties from peptidyl-tRNA molecules trapped in stalled 50S ribosomal subunits, and thus maintains levels of free tRNAs and 50S ribosomes. In Lactobacillus delbrueckii subsp. bulgaricus (strain ATCC 11842 / DSM 20081 / BCRC 10696 / JCM 1002 / NBRC 13953 / NCIMB 11778 / NCTC 12712 / WDCM 00102 / Lb 14), this protein is Peptidyl-tRNA hydrolase.